The chain runs to 191 residues: GTP-binding protein CIN4 (191 aa).

GTP is bound by residues 23-30, 69-73, and 131-134; these read GLDNSGKS, DIGGQ, and NKID.

Implicated in yeast microtubule function. The sequence is that of GTP-binding protein CIN4 (CIN4) from Saccharomyces cerevisiae (strain ATCC 204508 / S288c) (Baker's yeast).